The chain runs to 183 residues: Adenine phosphoribosyltransferase (183 aa).

The protein belongs to the purine/pyrimidine phosphoribosyltransferase family. In terms of assembly, homodimer.

The protein resides in the cytoplasm. The catalysed reaction is AMP + diphosphate = 5-phospho-alpha-D-ribose 1-diphosphate + adenine. It functions in the pathway purine metabolism; AMP biosynthesis via salvage pathway; AMP from adenine: step 1/1. In terms of biological role, catalyzes a salvage reaction resulting in the formation of AMP, that is energically less costly than de novo synthesis. This is Adenine phosphoribosyltransferase from Shewanella oneidensis (strain ATCC 700550 / JCM 31522 / CIP 106686 / LMG 19005 / NCIMB 14063 / MR-1).